The sequence spans 199 residues: Glycerol-3-phosphate acyltransferase (199 aa).

Helical transmembrane passes span 3–23 (AAVW…GVLV), 50–70 (WGPA…AVLV), 78–98 (DWML…SVFL), 113–133 (LLFL…SVIL), and 154–174 (LALG…LLIF).

This sequence belongs to the PlsY family. As to quaternary structure, probably interacts with PlsX.

Its subcellular location is the cell inner membrane. The catalysed reaction is an acyl phosphate + sn-glycerol 3-phosphate = a 1-acyl-sn-glycero-3-phosphate + phosphate. Its pathway is lipid metabolism; phospholipid metabolism. In terms of biological role, catalyzes the transfer of an acyl group from acyl-phosphate (acyl-PO(4)) to glycerol-3-phosphate (G3P) to form lysophosphatidic acid (LPA). This enzyme utilizes acyl-phosphate as fatty acyl donor, but not acyl-CoA or acyl-ACP. The protein is Glycerol-3-phosphate acyltransferase of Thermus thermophilus (strain ATCC BAA-163 / DSM 7039 / HB27).